The primary structure comprises 213 residues: A-type ATP synthase subunit D (213 aa).

This sequence belongs to the V-ATPase D subunit family. As to quaternary structure, has multiple subunits with at least A(3), B(3), C, D, E, F, H, I and proteolipid K(x).

The protein localises to the cell membrane. Functionally, component of the A-type ATP synthase that produces ATP from ADP in the presence of a proton gradient across the membrane. The protein is A-type ATP synthase subunit D of Saccharolobus islandicus (strain Y.N.15.51 / Yellowstone #2) (Sulfolobus islandicus).